We begin with the raw amino-acid sequence, 124 residues long: MVEPNISAYLQNQLRQAQELEENIEKLATQRYQLDLSLKEMQKTLDELNKLDDNTPIYRTVGSILYRVQDKKKLVDELDEQIELTKIRLSTLEKQQKSLEEKYKELQNAIRDRYNQENKKGATS.

This sequence belongs to the prefoldin subunit beta family. In terms of assembly, heterohexamer of two alpha and four beta subunits.

Its subcellular location is the cytoplasm. Molecular chaperone capable of stabilizing a range of proteins. Seems to fulfill an ATP-independent, HSP70-like function in archaeal de novo protein folding. The protein is Prefoldin subunit beta (pfdB) of Thermoplasma acidophilum (strain ATCC 25905 / DSM 1728 / JCM 9062 / NBRC 15155 / AMRC-C165).